The following is a 254-amino-acid chain: Fluoride-specific ion channel FluC 1 (254 aa).

Transmembrane regions (helical) follow at residues 19–39 (LDIL…TALY), 51–71 (IIGM…YGSV), and 80–100 (AFLI…VAVL). G58 and S61 together coordinate Na(+).

The protein belongs to the fluoride channel Fluc/FEX (TC 1.A.43) family.

The protein resides in the cell inner membrane. The catalysed reaction is fluoride(in) = fluoride(out). Its activity is regulated as follows. Na(+) is not transported, but it plays an essential structural role and its presence is essential for fluoride channel function. Fluoride-specific ion channel. Important for reducing fluoride concentration in the cell, thus reducing its toxicity. This is Fluoride-specific ion channel FluC 1 from Brucella suis biovar 1 (strain 1330).